The following is a 445-amino-acid chain: V-type proton ATPase subunit H (445 aa).

This sequence belongs to the V-ATPase H subunit family. V-ATPase is a heteromultimeric enzyme composed of a peripheral catalytic V1 complex (components A to H) attached to an integral membrane V0 proton pore complex (components: a, c, c', c'' and d).

Subunit of the peripheral V1 complex of vacuolar ATPase. Subunit H activates the ATPase activity of the enzyme and couples ATPase activity to proton flow. Vacuolar ATPase is responsible for acidifying a variety of intracellular compartments in eukaryotic cells, thus providing most of the energy required for transport processes in the vacuolar system. This Dictyostelium discoideum (Social amoeba) protein is V-type proton ATPase subunit H (vatH).